The sequence spans 86 residues: Insulin-related peptide 2 (86 aa).

The signal sequence occupies residues 1–19 (MKFYIVFALILACAACVSS). The propeptide occupies 20–43 (QEGTNFYCGRQLSRTLALVCWGAE). Arginine amide is present on Arg-63. The propeptide occupies 67 to 86 (GPVDECCLKPCSIEEMLTYC).

Belongs to the insulin family. DAGWWVPPQSARALGGGR-amide: Expressed in corpora cardiaca (CC), corpora allata (CA), antennal lobe (AL) and gnathal ganglion (GNG) (at protein level). Expression in CC and CA detected in most animals, in AL in some animals and in GNG in few animals (at protein level).

The protein resides in the secreted. The chain is Insulin-related peptide 2 from Agrotis ipsilon (Black cutworm moth).